A 156-amino-acid chain; its full sequence is Neuroactive polyprotein R15 (156 aa).

The first 26 residues, 1-26 (MDSAGLHINFRLSHVLTVVTCILYIL), serve as a signal peptide directing secretion. Residues 27 to 48 (PPTTTAYSLPAPGKAAFQHQLS) constitute a propeptide that is removed on maturation. An intrachain disulfide couples Cys74 to Cys81. Position 120 is a pyrrolidone carboxylic acid (Gln120).

As to expression, expressed within the abdominal ganglion in neurons R15, RB(HE), the two L9(G) gill motoneurons, and L40 interneuron, all are parts of autonomic control circuit that contributes to implementing a central command to coordinate autonomic activity with escape locomotion.

The protein resides in the secreted. Functionally, the alpha-1 peptide acts as an osmoregulatory peptide, increasing blood volume, and also modulates the activity of a set of cardiac motor neurons that control heart rate. The chain is Neuroactive polyprotein R15 from Aplysia californica (California sea hare).